A 249-amino-acid polypeptide reads, in one-letter code: Putative S-adenosyl-L-methionine-dependent methyltransferase Mjls_0570 (249 aa).

S-adenosyl-L-methionine is bound by residues D111 and 141–142 (DL).

This sequence belongs to the UPF0677 family.

Functionally, exhibits S-adenosyl-L-methionine-dependent methyltransferase activity. This chain is Putative S-adenosyl-L-methionine-dependent methyltransferase Mjls_0570, found in Mycobacterium sp. (strain JLS).